Consider the following 242-residue polypeptide: Biosynthetic peptidoglycan transglycosylase (242 aa).

The helical transmembrane segment at 19–39 (ILAALAVFWGGGIALFSVVPV) threads the bilayer.

Belongs to the glycosyltransferase 51 family.

The protein localises to the cell inner membrane. It carries out the reaction [GlcNAc-(1-&gt;4)-Mur2Ac(oyl-L-Ala-gamma-D-Glu-L-Lys-D-Ala-D-Ala)](n)-di-trans,octa-cis-undecaprenyl diphosphate + beta-D-GlcNAc-(1-&gt;4)-Mur2Ac(oyl-L-Ala-gamma-D-Glu-L-Lys-D-Ala-D-Ala)-di-trans,octa-cis-undecaprenyl diphosphate = [GlcNAc-(1-&gt;4)-Mur2Ac(oyl-L-Ala-gamma-D-Glu-L-Lys-D-Ala-D-Ala)](n+1)-di-trans,octa-cis-undecaprenyl diphosphate + di-trans,octa-cis-undecaprenyl diphosphate + H(+). It participates in cell wall biogenesis; peptidoglycan biosynthesis. Functionally, peptidoglycan polymerase that catalyzes glycan chain elongation from lipid-linked precursors. The sequence is that of Biosynthetic peptidoglycan transglycosylase from Salmonella paratyphi A (strain ATCC 9150 / SARB42).